A 668-amino-acid chain; its full sequence is CLK4-associating serine/arginine rich protein (668 aa).

At Ser101 the chain carries Phosphoserine. Disordered regions lie at residues 173–232 and 252–668; these read AEVE…GMAD and AKAL…HYRH. The span at 182 to 214 shows a compositional bias: acidic residues; sequence PEEEESPAEEESNSDEDEVIPDIDVEVDVDELN. Residues 265 to 283 show a composition bias toward basic residues; that stretch reads RRSRRQRREFREKRLRGRK. Phosphoserine occurs at positions 285 and 294. Residues 290–313 show a composition bias toward basic and acidic residues; it reads ARRDSPTYDPYKRSPSESSSESRS. Thr327 is subject to Phosphothreonine. Ser331 and Ser335 each carry phosphoserine. 2 stretches are compositionally biased toward low complexity: residues 340 to 353 and 378 to 395; these read AAAA…GAAP and SSSS…SRSS. Residues 396–435 show a composition bias toward basic residues; the sequence is SRSRRGYYRSGRHARSRSRSWSRSRSRSRRYSRSRSRGRR. The segment covering 436 to 446 has biased composition (basic and acidic residues); it reads HSDGGSRDGHR. The segment covering 475–486 has biased composition (basic residues); sequence RGARGPRHHSSS. 2 stretches are compositionally biased toward low complexity: residues 487–510 and 518–527; these read HSRS…SRSQ and QSHSQSQSHS. The residue at position 541 (Ser541) is a Phosphoserine. Thr567 is modified (phosphothreonine). Residues 579 to 641 adopt a coiled-coil conformation; sequence ALNRQFKADK…ERQYSRQSRS (63 aa). Basic and acidic residues-rich tracts occupy residues 584–611 and 619–635; these read FKAD…ELRA and KERE…ERQY. Residues 636 to 645 are compositionally biased toward low complexity; the sequence is SRQSRSPSPR. Residues 653 to 668 show a composition bias toward basic residues; it reads SRRRSRSRSRSPHYRH.

This sequence belongs to the splicing factor SR family. In terms of assembly, probably interacts with CLK4. Phosphorylated in vitro by CLK4. Highly expressed in brain. Expressed at intermediate level in lung and liver. In brain, it is expressed in the hippocampus, cerebellum and olfactory bulb.

The protein resides in the nucleus. The protein localises to the nucleoplasm. Probably functions as an alternative splicing regulator. May regulate the mRNA splicing of genes such as CLK1. May act by regulating members of the CLK kinase family. This is CLK4-associating serine/arginine rich protein (Clasrp) from Mus musculus (Mouse).